We begin with the raw amino-acid sequence, 147 residues long: Sentan (147 aa).

Residues 14–34 (RLEGEPNPPAAPTSTLAPKNM) form a disordered region. Residues 25 to 34 (PTSTLAPKNM) are compositionally biased toward polar residues.

Belongs to the S-100 family.

It is found in the cell projection. The protein localises to the cilium. May be a component of the linker structure that bridges the ciliary membrane and peripheral singlet microtubules. The chain is Sentan (SNTN) from Bos taurus (Bovine).